We begin with the raw amino-acid sequence, 212 residues long: Ribonuclease HII (212 aa).

One can recognise an RNase H type-2 domain in the interval 22–211 (GLVAGVDEVG…VADRILLQNT (190 aa)). Asp28, Glu29, and Asp120 together coordinate a divalent metal cation.

The protein belongs to the RNase HII family. Mn(2+) is required as a cofactor. Requires Mg(2+) as cofactor.

The protein localises to the cytoplasm. The enzyme catalyses Endonucleolytic cleavage to 5'-phosphomonoester.. Its function is as follows. Endonuclease that specifically degrades the RNA of RNA-DNA hybrids. The sequence is that of Ribonuclease HII from Shewanella frigidimarina (strain NCIMB 400).